Reading from the N-terminus, the 242-residue chain is Terpene cyclase dpfgB (242 aa).

The next 7 helical transmembrane spans lie at 15–37, 51–71, 75–95, 112–132, 141–161, 169–189, and 205–225; these read DVAW…NYVG, ALMA…IYPF, LEMY…YTAV, LPLI…ALAA, AWSA…QLLC, SYFL…QDIL, and LYIW…ICLW.

It belongs to the paxB family.

It is found in the membrane. Its pathway is secondary metabolite biosynthesis; terpenoid biosynthesis. Terpene cyclase; part of the gene cluster that mediates the biosynthesis of diterpenoid pyrones. The first step of the pathway is the synthesis of the alpha-pyrone moiety by the polyketide synthase dpfgA via condensation of one acetyl-CoA starter unit with 3 malonyl-CoA units and 2 methylations. The alpha-pyrone is then combined with geranylgeranyl pyrophosphate (GGPP) formed by the GGPP synthase dpfgD through the action of the prenyltransferase dpfgC to yield a linear alpha-pyrone diterpenoid. Subsequent steps in the diterpenoid pyrone biosynthetic pathway involve the decalin core formation, which is initiated by the epoxidation of the C10-C11 olefin by the FAD-dependent oxidoreductase dpfgE, and is followed by a cyclization cascade catalyzed by the terpene cyclase dpfgB. The short chain dehydrogenase/reductase dpfgG then oxidizes the 8S hydroxy group to a ketone and the short chain dehydrogenase/reductase dpfgH reduces the ketone to the 8R hydroxy group to yield higginsianin B. Higginsianin B is further methylated by the methyltransferase dpfgI to produce the intermediate named FDDP B. The cytochrome P450 monooxygenase dfgpJ then catalyzes a three-step oxidation at C-27 to generate a carboxylic acid as well as C-26 hydroxylation. Finally, methyltransferase dpfgK methylates the carboxylic acid generated by dpfgJ, yielding the final diterpenoid pyrones from the pathway which were named FDDP D and FDDP E. The protein is Terpene cyclase dpfgB of Gibberella zeae (strain ATCC MYA-4620 / CBS 123657 / FGSC 9075 / NRRL 31084 / PH-1) (Wheat head blight fungus).